The sequence spans 356 residues: S-adenosylmethionine:tRNA ribosyltransferase-isomerase (356 aa).

Belongs to the QueA family. In terms of assembly, monomer.

The protein localises to the cytoplasm. The catalysed reaction is 7-aminomethyl-7-carbaguanosine(34) in tRNA + S-adenosyl-L-methionine = epoxyqueuosine(34) in tRNA + adenine + L-methionine + 2 H(+). It participates in tRNA modification; tRNA-queuosine biosynthesis. Functionally, transfers and isomerizes the ribose moiety from AdoMet to the 7-aminomethyl group of 7-deazaguanine (preQ1-tRNA) to give epoxyqueuosine (oQ-tRNA). The polypeptide is S-adenosylmethionine:tRNA ribosyltransferase-isomerase (Escherichia coli O127:H6 (strain E2348/69 / EPEC)).